The chain runs to 381 residues: Dual specificity protein phosphatase 6 (381 aa).

The 119-residue stretch at 30–148 (GNEQLLLMDC…FQAEFALHCE (119 aa)) folds into the Rhodanese domain. The disordered stretch occupies residues 176 to 203 (SSSDIESDLDRDPNSATDSDGSPLSNSQ). Over residues 189 to 203 (NSATDSDGSPLSNSQ) the composition is skewed to polar residues. In terms of domain architecture, Tyrosine-protein phosphatase spans 206–349 (FPVEILPFLY…LLDFERTLGL (144 aa)). The active-site Phosphocysteine intermediate is Cys-293.

Belongs to the protein-tyrosine phosphatase family. Non-receptor class dual specificity subfamily. Interacts with MAPK1/ERK2. Ubiquitinated by the SCF(FBXO31) complex, leading to its proteasomal degradation. As to expression, expressed in lung, heart, brain, and kidney, but not significantly in skeletal muscle or testis.

Its subcellular location is the cytoplasm. It carries out the reaction O-phospho-L-tyrosyl-[protein] + H2O = L-tyrosyl-[protein] + phosphate. The enzyme catalyses O-phospho-L-seryl-[protein] + H2O = L-seryl-[protein] + phosphate. The catalysed reaction is O-phospho-L-threonyl-[protein] + H2O = L-threonyl-[protein] + phosphate. Functionally, dual specificity protein phosphatase, which mediates dephosphorylation and inactivation of MAP kinases. Has a specificity for the ERK family. Implicated in muscle and neuronal differentiation. Plays an important role in alleviating chronic postoperative pain. Necessary for the normal dephosphorylation of the long-lasting phosphorylated forms of spinal MAPK1/3 and MAP kinase p38 induced by peripheral surgery, which drives the resolution of acute postoperative allodynia. Also important for dephosphorylation of MAPK1/3 in local wound tissue, which further contributes to resolution of acute pain. The sequence is that of Dual specificity protein phosphatase 6 (Dusp6) from Rattus norvegicus (Rat).